The sequence spans 233 residues: Ribosome maturation factor RimP (233 aa).

Residues 167–179 are compositionally biased toward basic and acidic residues; the sequence is RGKAAEREKKRDL. Residues 167–233 are disordered; it reads RGKAAEREKK…RARRGEIDPD (67 aa). The segment covering 187–196 has biased composition (low complexity); the sequence is PHAKPAAQAK. The segment covering 220–233 has biased composition (basic and acidic residues); sequence LAADRARRGEIDPD.

This sequence belongs to the RimP family.

Its subcellular location is the cytoplasm. In terms of biological role, required for maturation of 30S ribosomal subunits. This is Ribosome maturation factor RimP from Bradyrhizobium sp. (strain ORS 278).